Reading from the N-terminus, the 288-residue chain is 4-diphosphocytidyl-2-C-methyl-D-erythritol kinase (288 aa).

Lys13 is a catalytic residue. 96–106 (PMGGGIGGGSS) contacts ATP. The active site involves Asp138.

This sequence belongs to the GHMP kinase family. IspE subfamily.

The enzyme catalyses 4-CDP-2-C-methyl-D-erythritol + ATP = 4-CDP-2-C-methyl-D-erythritol 2-phosphate + ADP + H(+). It functions in the pathway isoprenoid biosynthesis; isopentenyl diphosphate biosynthesis via DXP pathway; isopentenyl diphosphate from 1-deoxy-D-xylulose 5-phosphate: step 3/6. Functionally, catalyzes the phosphorylation of the position 2 hydroxy group of 4-diphosphocytidyl-2C-methyl-D-erythritol. In Aliivibrio fischeri (strain MJ11) (Vibrio fischeri), this protein is 4-diphosphocytidyl-2-C-methyl-D-erythritol kinase.